We begin with the raw amino-acid sequence, 233 residues long: Ubiquinone biosynthesis O-methyltransferase (233 aa).

S-adenosyl-L-methionine contacts are provided by arginine 37, glycine 56, aspartate 77, and methionine 121.

It belongs to the methyltransferase superfamily. UbiG/COQ3 family.

The catalysed reaction is a 3-demethylubiquinol + S-adenosyl-L-methionine = a ubiquinol + S-adenosyl-L-homocysteine + H(+). It carries out the reaction a 3-(all-trans-polyprenyl)benzene-1,2-diol + S-adenosyl-L-methionine = a 2-methoxy-6-(all-trans-polyprenyl)phenol + S-adenosyl-L-homocysteine + H(+). The protein operates within cofactor biosynthesis; ubiquinone biosynthesis. O-methyltransferase that catalyzes the 2 O-methylation steps in the ubiquinone biosynthetic pathway. In Azoarcus sp. (strain BH72), this protein is Ubiquinone biosynthesis O-methyltransferase.